Here is a 101-residue protein sequence, read N- to C-terminus: A-type ATP synthase subunit F (101 aa).

It belongs to the V-ATPase F subunit family. In terms of assembly, has multiple subunits with at least A(3), B(3), C, D, E, F, H, I and proteolipid K(x).

It localises to the cell membrane. Component of the A-type ATP synthase that produces ATP from ADP in the presence of a proton gradient across the membrane. The chain is A-type ATP synthase subunit F from Archaeoglobus fulgidus (strain ATCC 49558 / DSM 4304 / JCM 9628 / NBRC 100126 / VC-16).